Reading from the N-terminus, the 233-residue chain is Counting factor-associated protein A (233 aa).

The first 21 residues, methionine 1–threonine 21, serve as a signal peptide directing secretion. N-linked (GlcNAc...) asparagine glycosylation is found at asparagine 37 and asparagine 189.

It is found in the secreted. This is Counting factor-associated protein A (cfaA) from Dictyostelium discoideum (Social amoeba).